A 283-amino-acid polypeptide reads, in one-letter code: Phosphatidylserine decarboxylase proenzyme (283 aa).

Residues D89, H146, and S249 each act as charge relay system; for autoendoproteolytic cleavage activity in the active site. S249 (schiff-base intermediate with substrate; via pyruvic acid; for decarboxylase activity) is an active-site residue. A Pyruvic acid (Ser); by autocatalysis modification is found at S249.

This sequence belongs to the phosphatidylserine decarboxylase family. PSD-B subfamily. Prokaryotic type I sub-subfamily. As to quaternary structure, heterodimer of a large membrane-associated beta subunit and a small pyruvoyl-containing alpha subunit. Pyruvate is required as a cofactor. In terms of processing, is synthesized initially as an inactive proenzyme. Formation of the active enzyme involves a self-maturation process in which the active site pyruvoyl group is generated from an internal serine residue via an autocatalytic post-translational modification. Two non-identical subunits are generated from the proenzyme in this reaction, and the pyruvate is formed at the N-terminus of the alpha chain, which is derived from the carboxyl end of the proenzyme. The autoendoproteolytic cleavage occurs by a canonical serine protease mechanism, in which the side chain hydroxyl group of the serine supplies its oxygen atom to form the C-terminus of the beta chain, while the remainder of the serine residue undergoes an oxidative deamination to produce ammonia and the pyruvoyl prosthetic group on the alpha chain. During this reaction, the Ser that is part of the protease active site of the proenzyme becomes the pyruvoyl prosthetic group, which constitutes an essential element of the active site of the mature decarboxylase.

The protein resides in the cell membrane. It carries out the reaction a 1,2-diacyl-sn-glycero-3-phospho-L-serine + H(+) = a 1,2-diacyl-sn-glycero-3-phosphoethanolamine + CO2. It participates in phospholipid metabolism; phosphatidylethanolamine biosynthesis; phosphatidylethanolamine from CDP-diacylglycerol: step 2/2. Its function is as follows. Catalyzes the formation of phosphatidylethanolamine (PtdEtn) from phosphatidylserine (PtdSer). The protein is Phosphatidylserine decarboxylase proenzyme of Legionella pneumophila (strain Lens).